An 818-amino-acid polypeptide reads, in one-letter code: Phosphoinositide phosphatase SAC3 (818 aa).

In terms of domain architecture, SAC spans 153–546 (LCMVDLTKDF…GDTLAHQYGG (394 aa)). The tract at residues 426-459 (SLSSSSDADTGDISPHTSSDDDNGDHDSLEKKSS) is disordered. The Phosphatase catalytic core signature appears at 482-493 (RTNCIDCLDRTN). The segment covering 759–780 (LTAETSSTENSVNGVGQSAPTI) has biased composition (polar residues). A disordered region spans residues 759–800 (LTAETSSTENSVNGVGQSAPTISESGSSSSKGKEPMGTKIRE). Residues 789–800 (KGKEPMGTKIRE) show a composition bias toward basic and acidic residues.

Component of the PI(3,5)P2 regulatory complex at least composed of ATG18, SAC/FIG4, FAB1 and VAC14. Requires Mg(2+) as cofactor. Ubiquitous with a higher level of expression in young seedlings than in other tissues.

The protein resides in the vacuole membrane. It catalyses the reaction a 1,2-diacyl-sn-glycero-3-phospho-(1D-myo-inositol-3,5-bisphosphate) + H2O = a 1,2-diacyl-sn-glycero-3-phospho-(1D-myo-inositol-3-phosphate) + phosphate. The PI(3,5)P2 regulatory complex regulates both the synthesis and turnover of phosphatidylinositol 3,5-bisphosphate (PtdIns(3,5)P2). The protein is Phosphoinositide phosphatase SAC3 (SAC3) of Arabidopsis thaliana (Mouse-ear cress).